Reading from the N-terminus, the 399-residue chain is Elongation factor Tu (399 aa).

Residues 10–209 form the tr-type G domain; that stretch reads KPHVNIGTIG…AVDSYIPTPT (200 aa). A G1 region spans residues 19–26; that stretch reads GHVDHGKT. 19–26 provides a ligand contact to GTP; it reads GHVDHGKT. A Mg(2+)-binding site is contributed by threonine 26. The segment at 60 to 64 is G2; that stretch reads GITIA. Residues 81–84 form a G3 region; it reads DCPG. GTP contacts are provided by residues 81-85 and 136-139; these read DCPGH and NKAD. Positions 136–139 are G4; sequence NKAD. Residues 174-176 are G5; sequence SAL.

This sequence belongs to the TRAFAC class translation factor GTPase superfamily. Classic translation factor GTPase family. EF-Tu/EF-1A subfamily. Monomer.

It is found in the cytoplasm. The enzyme catalyses GTP + H2O = GDP + phosphate + H(+). GTP hydrolase that promotes the GTP-dependent binding of aminoacyl-tRNA to the A-site of ribosomes during protein biosynthesis. This Campylobacter jejuni (strain RM1221) protein is Elongation factor Tu.